Consider the following 154-residue polypeptide: Myoglobin (154 aa).

Positions 2-148 constitute a Globin domain; sequence GLSDGEWQMV…FRNDIAAKYK (147 aa). Phosphoserine occurs at positions 4 and 32. His-65 contributes to the nitrite binding site. Residue His-65 coordinates O2. At Thr-68 the chain carries Phosphothreonine. His-94 serves as a coordination point for heme b. Ser-121 and Ser-133 each carry phosphoserine.

The protein belongs to the globin family. As to quaternary structure, monomeric.

The protein resides in the cytoplasm. Its subcellular location is the sarcoplasm. The enzyme catalyses Fe(III)-heme b-[protein] + nitric oxide + H2O = Fe(II)-heme b-[protein] + nitrite + 2 H(+). It carries out the reaction H2O2 + AH2 = A + 2 H2O. Functionally, monomeric heme protein which primary function is to store oxygen and facilitate its diffusion within muscle tissues. Reversibly binds oxygen through a pentacoordinated heme iron and enables its timely and efficient release as needed during periods of heightened demand. Depending on the oxidative conditions of tissues and cells, and in addition to its ability to bind oxygen, it also has a nitrite reductase activity whereby it regulates the production of bioactive nitric oxide. Under stress conditions, like hypoxia and anoxia, it also protects cells against reactive oxygen species thanks to its pseudoperoxidase activity. The chain is Myoglobin from Rattus norvegicus (Rat).